We begin with the raw amino-acid sequence, 515 residues long: 1-pyrroline-5-carboxylate dehydrogenase (515 aa).

Residues E286 and C320 contribute to the active site.

The protein belongs to the aldehyde dehydrogenase family. RocA subfamily.

It catalyses the reaction L-glutamate 5-semialdehyde + NAD(+) + H2O = L-glutamate + NADH + 2 H(+). The protein operates within amino-acid degradation; L-proline degradation into L-glutamate; L-glutamate from L-proline: step 2/2. This is 1-pyrroline-5-carboxylate dehydrogenase from Bacillus cereus (strain B4264).